The sequence spans 318 residues: Death effector domain-containing protein (318 aa).

The region spanning 25 to 103 (SLHRMFDIVG…RHDLLPYVTL (79 aa)) is the DED domain. The disordered stretch occupies residues 128-191 (PRALSDPEPR…SVTPDPKEKQ (64 aa)).

In terms of assembly, interacts with CASP8, CASP10, KRT8, KRT18, CASP3 and FADD. Homodimerizes and heterodimerizes with DEDD2. In terms of processing, exists predominantly in a mono- or diubiquitinated form. As to expression, ubiquitously expressed.

The protein localises to the cytoplasm. It is found in the nucleus. The protein resides in the nucleolus. Functionally, a scaffold protein that directs CASP3 to certain substrates and facilitates their ordered degradation during apoptosis. May also play a role in mediating CASP3 cleavage of KRT18. Regulates degradation of intermediate filaments during apoptosis. May play a role in the general transcription machinery in the nucleus and might be an important regulator of the activity of GTF3C3. Inhibits DNA transcription in vitro. The sequence is that of Death effector domain-containing protein (Dedd) from Mus musculus (Mouse).